The chain runs to 88 residues: Alkene monooxygenase system, oxygenase component subunit gamma (88 aa).

This sequence belongs to the TmoB/XamoB family. In terms of assembly, the alkene monooxygenase multicomponent enzyme system is composed of an electron transfer component and a monooxygenase component interacting with the effector protein XamoD. The electron transfer component is composed of a ferredoxin reductase (XamoF) and a ferredoxin (XamoC), and the monooxygenase component is formed by a heterohexamer (dimer of heterotrimers) of two alpha subunits (XamoA), two beta subunits (XamoE) and two gamma subunits (XamoB).

The protein localises to the cytoplasm. The catalysed reaction is propene + NADH + O2 + H(+) = 1,2-epoxypropane + NAD(+) + H2O. Its activity is regulated as follows. Inhibited by propyne. Functionally, component of the alkene monooxygenase multicomponent enzyme system which catalyzes the O2- and NADH-dependent epoxidation of short chain (C2 to C6) alkenes to their corresponding epoxides. Also able to catalyze the oxidation of a number of chlorinated alkenes, including trichloroethylene, cis- and trans-1,2-dichloroethylene, vinyl chloride, 1-chloropropylene, 1,3-dichloropropylene and 2,3-dichloropropylene. This is Alkene monooxygenase system, oxygenase component subunit gamma from Xanthobacter autotrophicus (strain ATCC BAA-1158 / Py2).